Reading from the N-terminus, the 251-residue chain is 5-oxoprolinase subunit A (251 aa).

Belongs to the LamB/PxpA family. In terms of assembly, forms a complex composed of PxpA, PxpB and PxpC.

It carries out the reaction 5-oxo-L-proline + ATP + 2 H2O = L-glutamate + ADP + phosphate + H(+). Catalyzes the cleavage of 5-oxoproline to form L-glutamate coupled to the hydrolysis of ATP to ADP and inorganic phosphate. In Paracidovorax citrulli (strain AAC00-1) (Acidovorax citrulli), this protein is 5-oxoprolinase subunit A.